Consider the following 485-residue polypeptide: Ataxin-10 (485 aa).

The protein belongs to the ataxin-10 family.

The protein resides in the cytoplasm. Its subcellular location is the perinuclear region. It localises to the midbody. May play a role in the regulation of cytokinesis. May play a role in signaling by stimulating protein glycosylation. Induces neuritogenesis by activating the Ras-MAP kinase pathway and is necessary for the survival of cerebellar neurons. Does not appear to play a major role in ciliogenesis. This Xenopus tropicalis (Western clawed frog) protein is Ataxin-10 (atxn10).